Consider the following 224-residue polypeptide: MKLNPLILGLLLSFSAGHSLADVVLKVPENIDLLSVNMQKPKSEGGLFGDKTIMLKDGTNQIVFRYIPTFDDGDDVKKVYSDTIIAKFESENATLHFKIPSYRNIKEANEKIQTMEWQLVDEKGQSVALVEDKLLNPGVQWGRNYSQEATEYNQNGGVAAIGYLKVVTNEAQLSENTTQVIMSEASQPLEVVGSSNNLTQLQLWYSKASKEERKAFKKWMVDQE.

The N-terminal stretch at 1–21 (MKLNPLILGLLLSFSAGHSLA) is a signal peptide.

This sequence belongs to the UPF0319 family.

This Vibrio cholerae serotype O1 (strain ATCC 39315 / El Tor Inaba N16961) protein is UPF0319 protein VC_1853.